We begin with the raw amino-acid sequence, 712 residues long: Polyribonucleotide nucleotidyltransferase (712 aa).

Mg(2+)-binding residues include Asp-487 and Asp-493. The region spanning 554-613 (PKIITMTINPDKIRDVIGPSGKQINKIIEETGVKIDIEQDGTVFISSINQEMNDKAKKII) is the KH domain. Positions 623-691 (GEIYEGKVKR…KQGRVNLSRK (69 aa)) constitute an S1 motif domain.

Belongs to the polyribonucleotide nucleotidyltransferase family. The cofactor is Mg(2+).

Its subcellular location is the cytoplasm. It carries out the reaction RNA(n+1) + phosphate = RNA(n) + a ribonucleoside 5'-diphosphate. Its function is as follows. Involved in mRNA degradation. Catalyzes the phosphorolysis of single-stranded polyribonucleotides processively in the 3'- to 5'-direction. This chain is Polyribonucleotide nucleotidyltransferase, found in Bacillus cereus (strain ATCC 10987 / NRS 248).